A 1113-amino-acid polypeptide reads, in one-letter code: Protein translocase subunit SecA (1113 aa).

Residues glutamine 175, 193-197 (GEGKT), and aspartate 694 each bind ATP. Residues 1042-1072 (RHAAEQRTDMSKYRTQKDDIEAQQKAQRDAA) are compositionally biased toward basic and acidic residues. The disordered stretch occupies residues 1042 to 1113 (RHAAEQRTDM…KFKQCHGRNL (72 aa)). 4 residues coordinate Zn(2+): cysteine 1097, cysteine 1099, cysteine 1108, and histidine 1109. The span at 1103 to 1113 (KKFKQCHGRNL) shows a compositional bias: basic residues.

This sequence belongs to the SecA family. Monomer and homodimer. Part of the essential Sec protein translocation apparatus which comprises SecA, SecYEG and auxiliary proteins SecDF. Other proteins may also be involved. It depends on Zn(2+) as a cofactor.

It is found in the cell inner membrane. Its subcellular location is the cytoplasm. It catalyses the reaction ATP + H2O + cellular proteinSide 1 = ADP + phosphate + cellular proteinSide 2.. Functionally, part of the Sec protein translocase complex. Interacts with the SecYEG preprotein conducting channel. Has a central role in coupling the hydrolysis of ATP to the transfer of proteins into and across the cell membrane, serving as an ATP-driven molecular motor driving the stepwise translocation of polypeptide chains across the membrane. The polypeptide is Protein translocase subunit SecA (Porphyromonas gingivalis (strain ATCC 33277 / DSM 20709 / CIP 103683 / JCM 12257 / NCTC 11834 / 2561)).